We begin with the raw amino-acid sequence, 557 residues long: Glucose-6-phosphate isomerase (557 aa).

Alanine 2 carries the post-translational modification N-acetylalanine. Lysine 12 bears the N6-acetyllysine mark. The residue at position 107 (serine 107) is a Phosphoserine. Residue lysine 142 is modified to N6-acetyllysine. Glycine 159–serine 160 contacts D-glucose 6-phosphate. The residue at position 185 (serine 185) is a Phosphoserine; by CK2. Residue serine 210–threonine 215 coordinates D-glucose 6-phosphate. Threonine 250 carries the post-translational modification Phosphothreonine. D-glucose 6-phosphate-binding residues include glutamine 354, glutamate 358, and histidine 389. Glutamate 358 (proton donor) is an active-site residue. The active site involves histidine 389. Phosphoserine is present on serine 455. Lysine 519 contributes to the D-glucose 6-phosphate binding site. Lysine 519 is an active-site residue.

It belongs to the GPI family. Homodimer; in the catalytically active form. Monomer in the secreted form. In terms of processing, phosphorylation at Ser-185 by CK2 has been shown to decrease enzymatic activity and may contribute to secretion by a non-classical secretory pathway. ISGylated.

The protein localises to the cytoplasm. It localises to the secreted. It carries out the reaction alpha-D-glucose 6-phosphate = beta-D-fructose 6-phosphate. It participates in carbohydrate degradation; glycolysis; D-glyceraldehyde 3-phosphate and glycerone phosphate from D-glucose: step 2/4. Functionally, in the cytoplasm, catalyzes the conversion of glucose-6-phosphate to fructose-6-phosphate, the second step in glycolysis, and the reverse reaction during gluconeogenesis. Besides it's role as a glycolytic enzyme, also acts as a secreted cytokine: acts as an angiogenic factor (AMF) that stimulates endothelial cell motility. Acts as a neurotrophic factor, neuroleukin, for spinal and sensory neurons. It is secreted by lectin-stimulated T-cells and induces immunoglobulin secretion. The sequence is that of Glucose-6-phosphate isomerase from Bos taurus (Bovine).